The following is a 262-amino-acid chain: Probable cutinase 1 (262 aa).

Residues 1–19 (MAPLKSLLLGASLATLALS) form the signal peptide. 2 cysteine pairs are disulfide-bonded: cysteine 48/cysteine 127 and cysteine 74/cysteine 88. Serine 138 acts as the Nucleophile in catalysis. A disulfide bond links cysteine 189 and cysteine 196. Residue aspartate 193 is part of the active site. The active-site Proton donor/acceptor is the histidine 206. A disordered region spans residues 228 to 262 (SSSTTSSSSDAASSSSAAGTSSSGLSGLSSFFGGL).

Belongs to the cutinase family.

It localises to the secreted. The catalysed reaction is cutin + H2O = cutin monomers.. Functionally, catalyzes the hydrolysis of complex carboxylic polyesters found in the cell wall of plants. Degrades cutin, a macromolecule that forms the structure of the plant cuticle. This is Probable cutinase 1 from Aspergillus niger (strain ATCC MYA-4892 / CBS 513.88 / FGSC A1513).